Reading from the N-terminus, the 37-residue chain is Large ribosomal subunit protein bL12 (37 aa).

The protein belongs to the bacterial ribosomal protein bL12 family. Homodimer. Part of the ribosomal stalk of the 50S ribosomal subunit. Forms a multimeric L10(L12)X complex, where L10 forms an elongated spine to which 2 to 4 L12 dimers bind in a sequential fashion. Binds GTP-bound translation factors.

In terms of biological role, forms part of the ribosomal stalk which helps the ribosome interact with GTP-bound translation factors. Is thus essential for accurate translation. This Clostridium pasteurianum protein is Large ribosomal subunit protein bL12 (rplL).